The primary structure comprises 938 residues: Isoleucine--tRNA ligase (938 aa).

Residues 58–68 (PYANGHIHLGT) carry the 'HIGH' region motif. Glu-565 is an L-isoleucyl-5'-AMP binding site. The short motif at 606–610 (KMSKS) is the 'KMSKS' region element. ATP is bound at residue Lys-609. 4 residues coordinate Zn(2+): Cys-905, Cys-908, Cys-925, and Cys-928.

The protein belongs to the class-I aminoacyl-tRNA synthetase family. IleS type 1 subfamily. Monomer. The cofactor is Zn(2+).

Its subcellular location is the cytoplasm. The enzyme catalyses tRNA(Ile) + L-isoleucine + ATP = L-isoleucyl-tRNA(Ile) + AMP + diphosphate. Functionally, catalyzes the attachment of isoleucine to tRNA(Ile). As IleRS can inadvertently accommodate and process structurally similar amino acids such as valine, to avoid such errors it has two additional distinct tRNA(Ile)-dependent editing activities. One activity is designated as 'pretransfer' editing and involves the hydrolysis of activated Val-AMP. The other activity is designated 'posttransfer' editing and involves deacylation of mischarged Val-tRNA(Ile). The protein is Isoleucine--tRNA ligase of Nitratidesulfovibrio vulgaris (strain DSM 19637 / Miyazaki F) (Desulfovibrio vulgaris).